A 261-amino-acid chain; its full sequence is Tyrosine phosphatase-like protein H5 (261 aa).

The Tyrosine-protein phosphatase domain occupies 26–261 (LIKKEHDKVL…ESVEQEYFVP (236 aa)).

It belongs to the protein-tyrosine phosphatase family.

The chain is Tyrosine phosphatase-like protein H5 (H6) from Microplitis demolitor bracovirus (isolate Webb) (MdBV).